A 616-amino-acid polypeptide reads, in one-letter code: MALLQIAEPGQSSAPHQHKLAAGIDLGTTNSLVASVRSGTASTLVDSQGRSILPSVVNYGADATRVGYPAREQAETDPHNTVISVKRLLGRSLQDINQRYPHLPYRFKASEKGLPIVQTAQGDKNPIQISADILKALAERATATLGGELAGVVITVPAYFDDAQRVATKDAAALAGLHVLRLLNEPTAAAIAYGLDSGQEGVIAVYDLGGGTFDISILRLSRGVFEVLATGGDSALGGDDFDHLIADHLQAQIGLTSLTAEQQRALINAATQAKIDLTEHMTAELNVLGWQGTFTREELENLIAPLLKKTLLSCRRALKDAGVEADEVLEVVMVGGSTRTPFVREQVGEFFGRTPLTSINPDEVVAIGAAIQADILAGNKPDAEMLLLDVIPLSLGIETMGGLVEKIIPRNTTIPVARAQEFTTFKDGQTAMSVHVVQGEREMVDDCRSLARFSLKGIPPMAAGAAHIRVTYQVDADGLLSVTALEKSTGVQAEIQVKPSYGLSDDEVTQMLKDSMAYAKEDMLARALAEQRVEADRVIEGLVSALQADGDELLSEQERQTLLQAIERLIELRNGDNADAIEQGIKDTDKASQDFASRRMDKSIRSALAGHSVDEI.

The protein belongs to the heat shock protein 70 family.

Functionally, chaperone involved in the maturation of iron-sulfur cluster-containing proteins. Has a low intrinsic ATPase activity which is markedly stimulated by HscB. This Vibrio cholerae serotype O1 (strain M66-2) protein is Chaperone protein HscA homolog.